The primary structure comprises 257 residues: Diphthine synthase (257 aa).

Residues leucine 9, aspartate 85, valine 88, 113–114 (SI), leucine 164, alanine 209, and histidine 234 contribute to the S-adenosyl-L-methionine site.

This sequence belongs to the diphthine synthase family. In terms of assembly, homodimer.

The enzyme catalyses 2-[(3S)-amino-3-carboxypropyl]-L-histidyl-[translation elongation factor 2] + 3 S-adenosyl-L-methionine = diphthine-[translation elongation factor 2] + 3 S-adenosyl-L-homocysteine + 3 H(+). Its pathway is protein modification; peptidyl-diphthamide biosynthesis. S-adenosyl-L-methionine-dependent methyltransferase that catalyzes the trimethylation of the amino group of the modified target histidine residue in translation elongation factor 2 (EF-2), to form an intermediate called diphthine. The three successive methylation reactions represent the second step of diphthamide biosynthesis. The protein is Diphthine synthase of Methanocaldococcus jannaschii (strain ATCC 43067 / DSM 2661 / JAL-1 / JCM 10045 / NBRC 100440) (Methanococcus jannaschii).